We begin with the raw amino-acid sequence, 450 residues long: tRNA-2-methylthio-N(6)-dimethylallyladenosine synthase (450 aa).

Residues 8 to 128 enclose the MTTase N-terminal domain; that stretch reads KRLYIKTYGC…LPELIARAHR (121 aa). [4Fe-4S] cluster is bound by residues cysteine 17, cysteine 53, cysteine 91, cysteine 166, cysteine 170, and cysteine 173. The region spanning 152–382 is the Radical SAM core domain; sequence RPTGVTAFLT…QALLEQQQLA (231 aa). Residues 385 to 447 form the TRAM domain; sequence AAQAGRVLPV…RNSLAGVLEL (63 aa).

This sequence belongs to the methylthiotransferase family. MiaB subfamily. In terms of assembly, monomer. The cofactor is [4Fe-4S] cluster.

It is found in the cytoplasm. It carries out the reaction N(6)-dimethylallyladenosine(37) in tRNA + (sulfur carrier)-SH + AH2 + 2 S-adenosyl-L-methionine = 2-methylsulfanyl-N(6)-dimethylallyladenosine(37) in tRNA + (sulfur carrier)-H + 5'-deoxyadenosine + L-methionine + A + S-adenosyl-L-homocysteine + 2 H(+). Functionally, catalyzes the methylthiolation of N6-(dimethylallyl)adenosine (i(6)A), leading to the formation of 2-methylthio-N6-(dimethylallyl)adenosine (ms(2)i(6)A) at position 37 in tRNAs that read codons beginning with uridine. The protein is tRNA-2-methylthio-N(6)-dimethylallyladenosine synthase of Phenylobacterium zucineum (strain HLK1).